The following is a 728-amino-acid chain: Elongation factor 2 (728 aa).

One can recognise a tr-type G domain in the interval 19–261; that stretch reads EQIRNIAIAA…MVAEHFPNPI (243 aa). GTP is bound by residues 28–35, 94–98, and 148–151; these read AHVDHGKT, DTPGH, and NKVD. A Diphthamide modification is found at His-596.

It belongs to the TRAFAC class translation factor GTPase superfamily. Classic translation factor GTPase family. EF-G/EF-2 subfamily.

It localises to the cytoplasm. Functionally, catalyzes the GTP-dependent ribosomal translocation step during translation elongation. During this step, the ribosome changes from the pre-translocational (PRE) to the post-translocational (POST) state as the newly formed A-site-bound peptidyl-tRNA and P-site-bound deacylated tRNA move to the P and E sites, respectively. Catalyzes the coordinated movement of the two tRNA molecules, the mRNA and conformational changes in the ribosome. The chain is Elongation factor 2 from Halobacterium salinarum (strain ATCC 29341 / DSM 671 / R1).